The following is a 33-amino-acid chain: Brevinin-2GRb (33 aa).

Expressed by the skin glands.

The protein localises to the secreted. Functionally, antimicrobial peptide active against the Gram-positive bacterium S.aureus (MIC=25 uM) and against the Gram-negative bacteria E.coli (MIC=6 uM). Has no antifungal activity against C.albicans. Shows hemolytic activity against human erythrocytes only at high concentrations (LC(50)=180 uM). The sequence is that of Brevinin-2GRb from Odorrana grahami (Yunnanfu frog).